The sequence spans 297 residues: UDP-3-O-acyl-N-acetylglucosamine deacetylase (297 aa).

3 residues coordinate Zn(2+): His79, His238, and Asp242. Catalysis depends on His265, which acts as the Proton donor.

This sequence belongs to the LpxC family. It depends on Zn(2+) as a cofactor.

It carries out the reaction a UDP-3-O-[(3R)-3-hydroxyacyl]-N-acetyl-alpha-D-glucosamine + H2O = a UDP-3-O-[(3R)-3-hydroxyacyl]-alpha-D-glucosamine + acetate. Its pathway is glycolipid biosynthesis; lipid IV(A) biosynthesis; lipid IV(A) from (3R)-3-hydroxytetradecanoyl-[acyl-carrier-protein] and UDP-N-acetyl-alpha-D-glucosamine: step 2/6. In terms of biological role, catalyzes the hydrolysis of UDP-3-O-myristoyl-N-acetylglucosamine to form UDP-3-O-myristoylglucosamine and acetate, the committed step in lipid A biosynthesis. The chain is UDP-3-O-acyl-N-acetylglucosamine deacetylase from Blochmanniella pennsylvanica (strain BPEN).